The chain runs to 680 residues: Translation factor GUF1 homolog, chloroplastic (680 aa).

The transit peptide at 1 to 51 directs the protein to the chloroplast; that stretch reads MAAKINSLAALVSLQASHHHHXSTPFYFSPFSPHLSTTLTSRRRSLRSAVV. In terms of domain architecture, tr-type G spans 83–264; that stretch reads SNIRNFCIIA…AIVKRIPPPC (182 aa). GTP is bound by residues 92-99, 157-161, and 211-214; these read AHIDHGKS, DTPGH, and NKID.

It belongs to the TRAFAC class translation factor GTPase superfamily. Classic translation factor GTPase family. LepA subfamily.

Its subcellular location is the plastid. It is found in the chloroplast. The catalysed reaction is GTP + H2O = GDP + phosphate + H(+). Its function is as follows. Promotes chloroplast protein synthesis. May act as a fidelity factor of the translation reaction, by catalyzing a one-codon backward translocation of tRNAs on improperly translocated ribosomes. This chain is Translation factor GUF1 homolog, chloroplastic, found in Vitis vinifera (Grape).